The chain runs to 494 residues: Glycerol kinase (494 aa).

Thr-12 serves as a coordination point for ADP. ATP contacts are provided by Thr-12, Thr-13, and Ser-14. Residue Thr-12 coordinates sn-glycerol 3-phosphate. Arg-16 contributes to the ADP binding site. Sn-glycerol 3-phosphate is bound by residues Arg-82, Glu-83, Tyr-134, and Asp-241. Residues Arg-82, Glu-83, Tyr-134, Asp-241, and Gln-242 each contribute to the glycerol site. Residues Thr-263 and Gly-306 each contribute to the ADP site. Thr-263, Gly-306, Gln-310, and Gly-407 together coordinate ATP. Gly-407 serves as a coordination point for ADP.

This sequence belongs to the FGGY kinase family.

It catalyses the reaction glycerol + ATP = sn-glycerol 3-phosphate + ADP + H(+). It functions in the pathway polyol metabolism; glycerol degradation via glycerol kinase pathway; sn-glycerol 3-phosphate from glycerol: step 1/1. Inhibited by fructose 1,6-bisphosphate (FBP). In terms of biological role, key enzyme in the regulation of glycerol uptake and metabolism. Catalyzes the phosphorylation of glycerol to yield sn-glycerol 3-phosphate. The polypeptide is Glycerol kinase (Brachyspira hyodysenteriae (strain ATCC 49526 / WA1)).